Here is a 287-residue protein sequence, read N- to C-terminus: T-cell ecto-ADP-ribosyltransferase 1 (287 aa).

A signal peptide spans 1 to 20 (MPSNNFKFFLTWWLTQQVTG). Disulfide bonds link Cys41–Cys246, Cys80–Cys201, and Cys141–Cys193. The TR mART core domain occupies 61-241 (EELKLEWEKA…ISLDSPKRKK (181 aa)). NAD(+)-binding residues include Tyr98 and Arg146. Residues Arg146 and Ser167 contribute to the active site. Asn171 is a glycosylation site (N-linked (GlcNAc...) asparagine). Ser202 provides a ligand contact to NAD(+). The active site involves Glu209. Residue Asn256 is glycosylated (N-linked (GlcNAc...) asparagine). The GPI-anchor amidated serine moiety is linked to residue Ser258. A propeptide spans 259–287 (SLGSRESCVSLFLVVLLGLLVQQLTLAEP) (removed in mature form).

It belongs to the Arg-specific ADP-ribosyltransferase family. It is proposed that in the absence of reducing agents, a disulfide bond is formed between Cys-80 and Cys-201, leading to a conformational change that reduces the catalytic rate of NAD glycohydrolysis. Expressed in spleen, intestine and thymus.

Its subcellular location is the cell membrane. It carries out the reaction L-arginyl-[protein] + NAD(+) = N(omega)-(ADP-D-ribosyl)-L-arginyl-[protein] + nicotinamide + H(+). It catalyses the reaction NAD(+) + H2O = ADP-D-ribose + nicotinamide + H(+). Its function is as follows. Has both ADP-ribosyltransferase activity and thiol-dependent NAD(+) glycohydrolase activity. This is T-cell ecto-ADP-ribosyltransferase 1 (Art2a) from Mus musculus (Mouse).